A 133-amino-acid polypeptide reads, in one-letter code: Small ribosomal subunit protein uS8c (133 aa).

Belongs to the universal ribosomal protein uS8 family. Part of the 30S ribosomal subunit.

Its subcellular location is the plastid. The protein resides in the chloroplast. Its function is as follows. One of the primary rRNA binding proteins, it binds directly to 16S rRNA central domain where it helps coordinate assembly of the platform of the 30S subunit. The polypeptide is Small ribosomal subunit protein uS8c (rps8) (Chlorokybus atmophyticus (Soil alga)).